Reading from the N-terminus, the 436-residue chain is Origin recognition complex subunit 4 (436 aa).

The residue at position 7 (Lys-7) is an N6-methyllysine. Residue 67–74 coordinates ATP; the sequence is GPRGSGKT.

Belongs to the ORC4 family. In terms of assembly, component of ORC, a complex composed of at least 6 subunits: ORC1, ORC2, ORC3, ORC4, ORC5 and ORC6. ORC is regulated in a cell-cycle dependent manner. It is sequentially assembled at the exit from anaphase of mitosis and disassembled as cells enter S phase. Interacts with DBF4. Interacts with POLQ.

It localises to the nucleus. Component of the origin recognition complex (ORC) that binds origins of replication. DNA-binding is ATP-dependent. The specific DNA sequences that define origins of replication have not been identified yet. ORC is required to assemble the pre-replication complex necessary to initiate DNA replication. Binds histone H3 and H4 trimethylation marks H3K9me3, H3K27me3 and H4K20me3. The protein is Origin recognition complex subunit 4 (ORC4) of Homo sapiens (Human).